A 506-amino-acid chain; its full sequence is Protein NEN3 (506 aa).

Residues phenylalanine 15 to valine 176 enclose the Exonuclease domain. The Mg(2+) site is built by aspartate 17 and glutamate 19. The active-site Proton donor/acceptor is the histidine 164. Aspartate 169 contacts Mg(2+). Disordered stretches follow at residues lysine 204–aspartate 240 and alanine 289–serine 313. Positions serine 222–serine 238 are enriched in low complexity. Basic and acidic residues predominate over residues glutamate 290–aspartate 299.

Requires Mg(2+) as cofactor.

Functionally, probable exonuclease that may be involved in enuclation of sieve elements. The protein is Protein NEN3 (NEN3) of Arabidopsis thaliana (Mouse-ear cress).